The chain runs to 329 residues: Protein phosphatase 1 regulatory subunit 42 (329 aa).

LRR repeat units follow at residues 30-51 (KLTH…SVCR), 52-73 (NLTV…GFAS), 74-95 (NLTH…SSLH), 96-117 (KLSK…EELK), 118-139 (SLKE…AFDP), 148-169 (TLCI…APLR), and 170-191 (KMTH…ETVF). In terms of domain architecture, LRRCT spans 205-243 (NPVCHKPKYRDRLITVCKFLDDLDGKQINELSRQFLINW). Positions 268-329 (STSADFHLGP…SSTEWQSLKI (62 aa)) are disordered. Over residues 318 to 329 (GDSSTEWQSLKI) the composition is skewed to polar residues.

The protein localises to the cytoplasm. It localises to the cytoskeleton. Its subcellular location is the microtubule organizing center. The protein resides in the centrosome. Functionally, may regulate phosphatase activity of protein phosphatase 1 (PP1) complexes. This chain is Protein phosphatase 1 regulatory subunit 42 (ppp1r42), found in Danio rerio (Zebrafish).